Here is a 233-residue protein sequence, read N- to C-terminus: Forkhead box protein L3 (233 aa).

Residues 32–130 (RPAYSYIALI…ENGNYRRRRR (99 aa)) constitute a DNA-binding region (fork-head). Positions 125–134 (YRRRRRRRGP) are enriched in basic residues. Positions 125–198 (YRRRRRRRGP…PRDLKFSIDY (74 aa)) are disordered. The span at 175–184 (REPPASPAPP) shows a compositional bias: pro residues. The segment covering 185–194 (GKEHPRDLKF) has biased composition (basic and acidic residues).

The protein resides in the nucleus. Its function is as follows. Probable transcriptional regulator. This is Forkhead box protein L3 from Homo sapiens (Human).